The chain runs to 179 residues: MSRIGKLPIEVPKGVTVTFVDSVLTVKGPKGELCRTIMPEVSVAVEDGKISVTRPDDAIKSRSAHGLTRTLVNNMVVGVTAGYQTDLEINGVGYRAEVKGAELVLSLGYSHPVVFPLPSGITVEVDKMTKLAVKGIDKELVGQTAAKIRSFRGPEPYKGKGIKYATETILRKAGKTGKK.

The protein belongs to the universal ribosomal protein uL6 family. In terms of assembly, part of the 50S ribosomal subunit.

Functionally, this protein binds to the 23S rRNA, and is important in its secondary structure. It is located near the subunit interface in the base of the L7/L12 stalk, and near the tRNA binding site of the peptidyltransferase center. This chain is Large ribosomal subunit protein uL6, found in Trichlorobacter lovleyi (strain ATCC BAA-1151 / DSM 17278 / SZ) (Geobacter lovleyi).